Here is a 410-residue protein sequence, read N- to C-terminus: Aspartic proteinase Asp1 (410 aa).

An N-terminal signal peptide occupies residues 1 to 23; that stretch reads MTARLALLASLLLLLQLVPPSSA. Residues 24–46 constitute a propeptide, removed in mature form; it reads VVLELHGNVYPIGHFFVTMNIGD. The Peptidase A1 domain maps to 38 to 392; the sequence is FFVTMNIGDP…DSERSLLGWV (355 aa). Residues D56 and D257 contribute to the active site.

Belongs to the peptidase A1 family. Expressed in pollen, nucellus, ovary wall, shoot and root meristem, coleoptiles of immature seeds, and somatic embryos.

Its function is as follows. Possesses protease activity in vitro. This chain is Aspartic proteinase Asp1 (ASP1), found in Oryza sativa subsp. indica (Rice).